We begin with the raw amino-acid sequence, 76 residues long: Alpha/kappa-conotoxin-like fe14.1 (76 aa).

The N-terminal stretch at 1–24 (MPSVRSVTCCCLLWMMLSVQLVTP) is a signal peptide. The propeptide occupies 25–39 (GSPGTAQLSGHRTAR). 2 cysteine pairs are disulfide-bonded: cysteine 46–cysteine 61 and cysteine 50–cysteine 63. An Arginine amide modification is found at arginine 64. The propeptide occupies 65-76 (GKRDVVSSSMAV).

The protein belongs to the conotoxin J superfamily. In terms of tissue distribution, expressed by the venom duct.

The protein resides in the secreted. In terms of biological role, highly inhibits both nicotinic acetylcholine receptors (neuronal (alpha-3/beta-4) and muscular (alpha-1/beta-1/epsilon/delta) subtypes) and the voltage-gated potassium channel Kv1.6/KCNA6 subtype. The sequence is that of Alpha/kappa-conotoxin-like fe14.1 from Conus ferrugineus (Cone snail).